We begin with the raw amino-acid sequence, 737 residues long: Relaxin receptor 2 (737 aa).

The Extracellular portion of the chain corresponds to 1-399; the sequence is MWLLLHVILL…SSSEDLLANG (399 aa). Residues 27-64 form the LDL-receptor class A domain; the sequence is LCPKGYFPCGNLTKCLPRAFHCDGVDDCGNGADEDNCG. 3 disulfides stabilise this stretch: Cys28–Cys41, Cys35–Cys54, and Cys48–Cys63. N-linked (GlcNAc...) asparagine glycosylation occurs at Asn37. An N-linked (GlcNAc...) asparagine glycan is attached at Asn121. LRR repeat units lie at residues 121–142, 145–166, 169–190, 193–214, 217–238, 241–262, 265–286, 289–310, 313–334, and 337–358; these read NVTL…VFSR, ELRK…AFLG, NLQI…IFKD, QLAW…SFMG, SLFF…LCAQ, QLNW…TFLT, SLTV…TFSS, NLGE…LFSD, LLQK…QFGS, and QLQS…MFQP. Asn257 carries N-linked (GlcNAc...) asparagine glycosylation. Residues Asn318, Asn350, and Asn361 are each glycosylated (N-linked (GlcNAc...) asparagine). The chain crosses the membrane as a helical span at residues 400 to 420; the sequence is ILRVSVWVIAFITCVGNFLVI. Residues 421–438 are Cytoplasmic-facing; it reads AVRSLIKAENTTHAMSIK. A helical transmembrane segment spans residues 439 to 459; the sequence is ILCCADCLMGVYLFSVGVFDI. The Extracellular segment spans residues 460-478; that stretch reads KYRGQYQKYALLWMESVPC. Cys478 and Cys556 are oxidised to a cystine. The chain crosses the membrane as a helical span at residues 479 to 501; the sequence is RLLGFLATLSTEVSVLLLTFLTL. Residues 502–520 are Cytoplasmic-facing; the sequence is EKFLVIVFPFSNLRLGKRQ. Residues 521–541 form a helical membrane-spanning segment; it reads TAVALASIWVVGFLIAAVPFT. Residues 542-575 lie on the Extracellular side of the membrane; that stretch reads REDYFGNFYGKNGVCFPLHYDQAEDFGSRGYSLG. The helical transmembrane segment at 576–596 threads the bilayer; it reads IFLGVNLLAFLVIVISYVTMF. Residues 597–622 lie on the Cytoplasmic side of the membrane; that stretch reads CSIHKTALQTAEVRSHIGKEVAVANR. The chain crosses the membrane as a helical span at residues 623 to 643; that stretch reads FFFIVFSDAICWIPVFVVKIL. Residues 644 to 653 lie on the Extracellular side of the membrane; it reads SLLQVEIPGT. The chain crosses the membrane as a helical span at residues 654 to 674; sequence ITSWIVVFFLPVNSALNPILY. Residues 675 to 737 are Cytoplasmic-facing; sequence TLTTSFFKDK…GDSIMKPVSP (63 aa).

This sequence belongs to the G-protein coupled receptor 1 family. Expressed in embryonic and adult gonads of males and females, as well in male gubernarculum. Expressed also in brain. Not detected in kidney, spleen and heart.

It localises to the cell membrane. In terms of biological role, receptor for relaxin. The activity of this receptor is mediated by G proteins leading to stimulation of adenylate cyclase and an increase of cAMP. May also be a receptor for Leydig insulin-like peptide (INSL3). The protein is Relaxin receptor 2 (Rxfp2) of Mus musculus (Mouse).